The chain runs to 493 residues: Cholesteryl ester transfer protein (493 aa).

A signal peptide spans 1–17 (MLAATVLTLALLGNAHA). Asn105 carries an N-linked (GlcNAc...) (complex) asparagine glycan. A disulfide bridge links Cys160 with Cys201. N-linked (GlcNAc...) asparagine glycans are attached at residues Asn257, Asn358, and Asn413.

It belongs to the BPI/LBP/Plunc superfamily. BPI/LBP family. As to expression, expressed by the liver and secreted in plasma.

The protein resides in the secreted. The enzyme catalyses cholesteryl (9Z-octadecenoate)(in) = cholesteryl (9Z-octadecenoate)(out). It carries out the reaction 1,2,3-tri-(9Z-octadecenoyl)-glycerol(in) = 1,2,3-tri-(9Z-octadecenoyl)-glycerol(out). The catalysed reaction is cholesteryl (9Z,12Z)-octadecadienoate(in) = cholesteryl (9Z,12Z)-octadecadienoate(out). Functionally, involved in the transfer of neutral lipids, including cholesteryl ester and triglyceride, among lipoprotein particles. Allows the net movement of cholesteryl ester from high density lipoproteins/HDL to triglyceride-rich very low density lipoproteins/VLDL, and the equimolar transport of triglyceride from VLDL to HDL. Regulates the reverse cholesterol transport, by which excess cholesterol is removed from peripheral tissues and returned to the liver for elimination. This Homo sapiens (Human) protein is Cholesteryl ester transfer protein.